A 323-amino-acid chain; its full sequence is RNA polymerase sigma factor SigB (323 aa).

The segment at 1-228 is sufficient to interact with RbpA; the sequence is MADAPTRATT…DMPVGSEEEA (228 aa). Residues 25-59 are sigma-70 factor domain-1; sequence DLVRVYLNGIGKTALLNAAGEVELAKRIEAGLYAE. Residues 90–160 are sigma-70 factor domain-2; it reads LLEANLRLVV…TRGMADQSRT (71 aa). The short motif at 114 to 117 is the Polymerase core binding element; it reads DLIQ. The tract at residues 169–245 is sigma-70 factor domain-3; it reads EQVNKLARIK…DAEAMSAENA (77 aa). The sigma-70 factor domain-4 stretch occupies residues 258-311; it reads VLATLDEREHQVIRLRFGLDDGQPRTLDQIGKLFGLSRERVRQIERDVMSKLRH. Positions 284-303 form a DNA-binding region, H-T-H motif; that stretch reads LDQIGKLFGLSRERVRQIER.

The protein belongs to the sigma-70 factor family. In terms of assembly, monomer. Interacts transiently with the RNA polymerase catalytic core formed by RpoA, RpoB, RpoC and RpoZ (2 alpha, 1 beta, 1 beta' and 1 omega subunit) to form the RNA polymerase holoenzyme that can initiate transcription.

Sigma factors are initiation factors that promote the attachment of RNA polymerase to specific initiation sites and are then released. A non-essential principal sigma factor that responds to cell envelope stress and hypoxia. This is RNA polymerase sigma factor SigB (sigB) from Mycobacterium tuberculosis (strain CDC 1551 / Oshkosh).